We begin with the raw amino-acid sequence, 610 residues long: Terminase, large subunit (610 aa).

The interval 30-94 (RKDEDGIHWI…SRYMGLPNLK (65 aa)) is ssDNA-binding. The interval 131–301 (DYGVIKVQLR…NHFYDIWTAA (171 aa)) is ATPase activity. The ATP site is built by Q138 and Q143. Positions 161–167 (SRQLGKT) match the Walker A motif motif. R202 provides a ligand contact to ATP. Residues 251–256 (MIYIDE) carry the Walker B motif motif. E256 functions as the For ATPase activity in the catalytic mechanism. An ATPase coupling motif is present at residues 285–287 (TTT). A binding to the portal protein region spans residues 328 to 352 (IFDDGWQWSIQTINGSSLAQFRQEH). A nuclease activity region spans residues 360–559 (SGTLISGMKL…FGWLSTQSKF (200 aa)). Mg(2+) is bound by residues D401, E458, and D542.

It belongs to the Tequatrovirus large terminase family. As to quaternary structure, interacts with the terminase small subunit; the active complex is composed of a pentamer of terminase large subunits and a dodecamer of terminase small subunits. Interacts with the portal protein. Interacts with the RNA polymerase sigma factor gp55. The cofactor is Mg(2+). Post-translationally, phosphorylated.

Its activity is regulated as follows. Stimulated up to 50 to 100-fold by the terminase small subunit. Modestly activated by portal protein and single-stranded binding protein gp32 multimers. Functionally, the terminase large subunit acts as an ATP driven molecular motor necessary for viral DNA translocation into empty capsids and as an endonuclease that cuts the viral genome to initiate and to end a packaging reaction. The terminase lies at a unique vertex of the procapsid and is composed of two subunits, a small terminase subunit involved in viral DNA recognition (packaging sequence), and a large terminase subunit possessing endonucleolytic and ATPase activities. Both terminase subunits heterooligomerize and are docked on the portal protein to form the packaging machine. The terminase large subunit exhibits endonuclease activity and cleaves the viral genome concatemer once the capsid is full (headful packaging). Once the capsid is packaged with the DNA, the terminase complex is substituted by the tail. The polypeptide is Terminase, large subunit (17) (Escherichia coli (Bacteriophage T4)).